The primary structure comprises 648 residues: Phosphomethylpyrimidine synthase (648 aa).

Residues Asn236, Met265, Tyr294, His330, 350–352 (SRG), 391–394 (DGLR), and Glu430 contribute to the substrate site. His434 contributes to the Zn(2+) binding site. Residue Tyr457 participates in substrate binding. A Zn(2+)-binding site is contributed by His498. The [4Fe-4S] cluster site is built by Cys578, Cys581, and Cys586.

It belongs to the ThiC family. Homodimer. Requires [4Fe-4S] cluster as cofactor.

The catalysed reaction is 5-amino-1-(5-phospho-beta-D-ribosyl)imidazole + S-adenosyl-L-methionine = 4-amino-2-methyl-5-(phosphooxymethyl)pyrimidine + CO + 5'-deoxyadenosine + formate + L-methionine + 3 H(+). The protein operates within cofactor biosynthesis; thiamine diphosphate biosynthesis. Functionally, catalyzes the synthesis of the hydroxymethylpyrimidine phosphate (HMP-P) moiety of thiamine from aminoimidazole ribotide (AIR) in a radical S-adenosyl-L-methionine (SAM)-dependent reaction. This chain is Phosphomethylpyrimidine synthase, found in Aliivibrio salmonicida (strain LFI1238) (Vibrio salmonicida (strain LFI1238)).